The primary structure comprises 1106 residues: Zinc finger protein GLI1 (1106 aa).

The tract at residues 1–20 is SNAG domain; that stretch reads MFNSMTPPPISSYGEPCCLR. Residues 120–124 form an interaction with SUFU region; the sequence is SYGHL. C2H2-type zinc fingers lie at residues 235–260, 268–295, 301–325, 331–356, and 362–387; these read TDCR…NSEH, FVCH…MRRH, HKCT…LRSH, YMCE…NRTH, and YVCK…KTVH. Positions 283–291 are interaction with DNA; it reads KAQYMLVVH. 2 interaction with DNA regions span residues 345 to 350 and 375 to 381; these read ASDRAK and DPSSLRK. Disordered stretches follow at residues 375–485, 516–580, 732–792, 817–889, and 914–942; these read DPSS…DEGP, GLKL…SLPG, YGGP…LYPG, EQGC…PTHS, and GRED…SRAK. Residues 413–428 show a composition bias toward basic and acidic residues; sequence EPKREREGGPIREESR. Residues 442–463 show a composition bias toward polar residues; the sequence is PGAQSSCSSDHSPAGSAANTDS. At Lys-518 the chain carries N6-acetyllysine. 2 stretches are compositionally biased toward low complexity: residues 544–560 and 737–753; these read SSSS…RRSS and GAAA…SLPL. Over residues 754–766 the composition is skewed to pro residues; sequence GPGPPTNYGPNPC. A compositionally biased stretch (polar residues) spans 768 to 779; it reads QQASYPDPTQET. A Glycyl lysine isopeptide (Lys-Gly) (interchain with G-Cter in SUMO2) cross-link involves residue Lys-1003. The disordered stretch occupies residues 1054 to 1087; that stretch reads DEPQGLSPPPSHDQRGSSGHTPPPSGPPNMAVGN.

The protein belongs to the GLI C2H2-type zinc-finger protein family. Interacts with KIF7. Interacts with STK36. Interacts with ZIC1; the interaction enhances transcription activation. Interacts with SUFU; this inhibits transcriptional activation by GLI1. In terms of processing, phosphorylated in vitro by ULK3. Acetylation at Lys-518 down-regulates transcriptional activity. Deacetylated by HDAC1. Post-translationally, ubiquitinated by the CRL2(FEM1B) complex, suppressing GLI1 transcriptional activator activity. As to expression, detected in testis (at protein level). Testis, myometrium and fallopian tube. Also expressed in the brain with highest expression in the cerebellum, optic nerve and olfactory tract. Isoform 1 is detected in brain, spleen, pancreas, liver, kidney and placenta; isoform 2 is not detectable in these tissues.

It localises to the cytoplasm. It is found in the nucleus. Acts as a transcriptional activator. Binds to the DNA consensus sequence 5'-GACCACCCA-3'. Regulates the transcription of specific genes during normal development. Plays a role in craniofacial development and digital development, as well as development of the central nervous system and gastrointestinal tract. Mediates SHH signaling. Plays a role in cell proliferation and differentiation via its role in SHH signaling. Its function is as follows. Acts as a transcriptional activator, but activates a different set of genes than isoform 1. Activates expression of CD24, unlike isoform 1. Mediates SHH signaling. Promotes cancer cell migration. This chain is Zinc finger protein GLI1 (GLI1), found in Homo sapiens (Human).